Consider the following 862-residue polypeptide: Mismatch repair endonuclease PMS2 (862 aa).

N45, D70, E109, A110, and L111 together coordinate ATP. Basic and acidic residues-rich tracts occupy residues 391–401, 408–444, 484–495, and 528–552; these read DLEKPMVEKQD, TGEE…EPRR, PTDRAEVEKDSG, and GSQE…VDCH. The disordered stretch occupies residues 391–552; it reads DLEKPMVEKQ…DDSFSDVDCH (162 aa). Position 573 is a phosphothreonine (T573). The Nuclear localization signal signature appears at 577–580; sequence KRFK. Residue T597 is modified to Phosphothreonine.

The protein belongs to the DNA mismatch repair MutL/HexB family. Heterodimer of PMS2 and MLH1 (MutL alpha); this interaction is required for the stability of both partners. Forms a ternary complex with MutS alpha (MSH2-MSH6) or MutS beta (MSH2-MSH3). Part of the BRCA1-associated genome surveillance complex (BASC), which contains BRCA1, MSH2, MSH6, MLH1, ATM, BLM, PMS2 and the RAD50-MRE11-NBS1 protein complex. This association could be a dynamic process changing throughout the cell cycle and within subnuclear domains. Interacts with MTMR15/FAN1.

It is found in the nucleus. It carries out the reaction ATP + H2O = ADP + phosphate + H(+). Its function is as follows. Component of the post-replicative DNA mismatch repair system (MMR). Heterodimerizes with MLH1 to form MutL alpha. DNA repair is initiated by MutS alpha (MSH2-MSH6) or MutS beta (MSH2-MSH3) binding to a dsDNA mismatch, then MutL alpha is recruited to the heteroduplex. Assembly of the MutL-MutS-heteroduplex ternary complex in presence of RFC and PCNA is sufficient to activate endonuclease activity of PMS2. It introduces single-strand breaks near the mismatch and thus generates new entry points for the exonuclease EXO1 to degrade the strand containing the mismatch. DNA methylation would prevent cleavage and therefore assure that only the newly mutated DNA strand is going to be corrected. MutL alpha (MLH1-PMS2) interacts physically with the clamp loader subunits of DNA polymerase III, suggesting that it may play a role to recruit the DNA polymerase III to the site of the MMR. Also implicated in DNA damage signaling, a process which induces cell cycle arrest and can lead to apoptosis in case of major DNA damages. Possesses an ATPase activity, but in the absence of gross structural changes, ATP hydrolysis may not be necessary for proficient mismatch repair. The chain is Mismatch repair endonuclease PMS2 from Homo sapiens (Human).